The sequence spans 84 residues: Large ribosomal subunit protein bL27 (84 aa).

The interval 1–25 is disordered; that stretch reads MSHKKAGGSTRNGRDSNAQRRGVKK.

The protein belongs to the bacterial ribosomal protein bL27 family.

The polypeptide is Large ribosomal subunit protein bL27 (Desulforapulum autotrophicum (strain ATCC 43914 / DSM 3382 / VKM B-1955 / HRM2) (Desulfobacterium autotrophicum)).